The sequence spans 464 residues: Cell division protein FtsA (464 aa).

The interval 392–464 (EVIETDKDTE…FKKLMKSLFE (73 aa)) is disordered. The span at 416 to 455 (KKENDEVAPEAPREESYEDRENHLEDEQQTEGKAKEESKF) shows a compositional bias: basic and acidic residues.

The protein belongs to the FtsA/MreB family. As to quaternary structure, self-interacts. Interacts with FtsZ.

The protein localises to the cell membrane. In terms of biological role, cell division protein that is involved in the assembly of the Z ring. May serve as a membrane anchor for the Z ring. The protein is Cell division protein FtsA of Staphylococcus epidermidis (strain ATCC 12228 / FDA PCI 1200).